A 205-amino-acid chain; its full sequence is Protein TGAM_1450 (205 aa).

The region spanning Glu-7–Arg-201 is the AMMECR1 domain.

This chain is Protein TGAM_1450, found in Thermococcus gammatolerans (strain DSM 15229 / JCM 11827 / EJ3).